Reading from the N-terminus, the 98-residue chain is NADH-ubiquinone oxidoreductase chain 4L (98 aa).

The next 3 helical transmembrane spans lie at Met1–Ile21, Ser29–Leu49, and Ile61–Ile81.

Belongs to the complex I subunit 4L family. As to quaternary structure, core subunit of respiratory chain NADH dehydrogenase (Complex I) which is composed of 45 different subunits.

Its subcellular location is the mitochondrion inner membrane. The catalysed reaction is a ubiquinone + NADH + 5 H(+)(in) = a ubiquinol + NAD(+) + 4 H(+)(out). Functionally, core subunit of the mitochondrial membrane respiratory chain NADH dehydrogenase (Complex I) which catalyzes electron transfer from NADH through the respiratory chain, using ubiquinone as an electron acceptor. Part of the enzyme membrane arm which is embedded in the lipid bilayer and involved in proton translocation. This is NADH-ubiquinone oxidoreductase chain 4L (MT-ND4L) from Cebus albifrons (White-fronted capuchin).